Reading from the N-terminus, the 180-residue chain is Shikimate kinase (180 aa).

Residue 14–19 participates in ATP binding; it reads GAGKSS. Residue serine 18 coordinates Mg(2+). Residues aspartate 36, arginine 60, and glycine 82 each contribute to the substrate site. Arginine 120 contacts ATP. Arginine 139 contacts substrate.

Belongs to the shikimate kinase family. As to quaternary structure, monomer. Mg(2+) is required as a cofactor.

It is found in the cytoplasm. The enzyme catalyses shikimate + ATP = 3-phosphoshikimate + ADP + H(+). The protein operates within metabolic intermediate biosynthesis; chorismate biosynthesis; chorismate from D-erythrose 4-phosphate and phosphoenolpyruvate: step 5/7. Its function is as follows. Catalyzes the specific phosphorylation of the 3-hydroxyl group of shikimic acid using ATP as a cosubstrate. In Xylella fastidiosa (strain M23), this protein is Shikimate kinase.